An 81-amino-acid chain; its full sequence is Small ribosomal subunit protein uS17 (81 aa).

It belongs to the universal ribosomal protein uS17 family. In terms of assembly, part of the 30S ribosomal subunit.

Functionally, one of the primary rRNA binding proteins, it binds specifically to the 5'-end of 16S ribosomal RNA. The polypeptide is Small ribosomal subunit protein uS17 (Methylocella silvestris (strain DSM 15510 / CIP 108128 / LMG 27833 / NCIMB 13906 / BL2)).